The primary structure comprises 602 residues: MSVEQKYIRNFCIIAHIDHGKSTLADRLLEYTGALSKREMVDQVLDTMDLERERGITIKLQAVRLHYKARDGQEYVLNLIDTPGHVDFTYEVSRSLAACEGALLVVDAAQGIEAQTLANVYLALEHNLEIIPVINKIDLPSAEPERVRREIEDVIGLDASEAILASAKTGVGTEEILEAIIRRVPPPRGDGEAPLQALIFDSIFDSYRGAIPYFRVVQGRVRKGDRIRFMATGAEFEVNEVGVFTPAPRPVESLAAGEVGFLSASIKNVKDTRVGDTITSAERPAPAPLPGYRKVMPMVYCGLFPVESERYDDLRDALEKLQLNDASLTFETETSVALGFGFRCGFLGLLHMEIIQERLEREYGLELITTAPSVVYRVVGTNGSVIMVDNPTALPAPNLIDHIEEPFVEATIMTPKDFVGPVMELCQEKRGSFLNMDYLSEKRVALKYDLPLAEIIYDFFDQLKSRTRGYASLDYSLKGYRPSELVKMDILVNNEVVDALSLITHRDQAYQRGRALVERLRQLIPRQLFDVPIQAAIGSRVIARETIPALRKNVLAKCYGGDVTRKRKLLEKQKEGKKRMKQVGTVDIPQEAFMAVLKAGKS.

The tr-type G domain maps to 6–188; sequence KYIRNFCIIA…AIIRRVPPPR (183 aa). GTP contacts are provided by residues 18–23 and 135–138; these read DHGKST and NKID.

The protein belongs to the TRAFAC class translation factor GTPase superfamily. Classic translation factor GTPase family. LepA subfamily.

The protein localises to the cell membrane. It carries out the reaction GTP + H2O = GDP + phosphate + H(+). Functionally, required for accurate and efficient protein synthesis under certain stress conditions. May act as a fidelity factor of the translation reaction, by catalyzing a one-codon backward translocation of tRNAs on improperly translocated ribosomes. Back-translocation proceeds from a post-translocation (POST) complex to a pre-translocation (PRE) complex, thus giving elongation factor G a second chance to translocate the tRNAs correctly. Binds to ribosomes in a GTP-dependent manner. The protein is Elongation factor 4 of Moorella thermoacetica (strain ATCC 39073 / JCM 9320).